The sequence spans 218 residues: Probable transaldolase (218 aa).

Lysine 87 acts as the Schiff-base intermediate with substrate in catalysis.

Belongs to the transaldolase family. Type 3B subfamily.

Its subcellular location is the cytoplasm. It carries out the reaction D-sedoheptulose 7-phosphate + D-glyceraldehyde 3-phosphate = D-erythrose 4-phosphate + beta-D-fructose 6-phosphate. Its pathway is carbohydrate degradation; pentose phosphate pathway; D-glyceraldehyde 3-phosphate and beta-D-fructose 6-phosphate from D-ribose 5-phosphate and D-xylulose 5-phosphate (non-oxidative stage): step 2/3. Its function is as follows. Transaldolase is important for the balance of metabolites in the pentose-phosphate pathway. This is Probable transaldolase from Bacteroides thetaiotaomicron (strain ATCC 29148 / DSM 2079 / JCM 5827 / CCUG 10774 / NCTC 10582 / VPI-5482 / E50).